The following is an 857-amino-acid chain: Facilitated trehalose transporter Tret1-1 (857 aa).

Disordered stretches follow at residues 1 to 27 (MSGR…GKLK) and 92 to 203 (SFRP…KATS). Residues 1–392 (MSGRDNRGAG…VYRPTTNPIY (392 aa)) lie on the Cytoplasmic side of the membrane. Over residues 134-143 (EIREHRDRQQ) the composition is skewed to basic and acidic residues. The span at 171-181 (GNSNTNSNKAA) shows a compositional bias: polar residues. 5 positions are modified to phosphoserine: S248, S249, S250, S320, and S322. The tract at residues 327–346 (LTSRQHFQQQRSISTDSRKS) is disordered. Residues 330–341 (RQHFQQQRSIST) show a composition bias toward polar residues. Residues 393–413 (IWTQVLAALSVSLGSLVVGFV) form a helical membrane-spanning segment. Residues 414–440 (SAYTSPALVSMTDRNITSFEVTQDAGS) are Extracellular-facing. N-linked (GlcNAc...) asparagine glycosylation occurs at N428. A helical transmembrane segment spans residues 441-461 (WVGGIMPLAALAGGITGGPLI). Residues 462–473 (EYLGRRNTILAT) are Cytoplasmic-facing. Residues 474-494 (AVPFIVSSLLIACAVNVAMVL) traverse the membrane as a helical segment. Topologically, residues 495-497 (CGR) are extracellular. Residues 498–518 (FLAGFCVGIASLSLPVYLGET) traverse the membrane as a helical segment. At 519–528 (VQPEVRGTLG) the chain is on the cytoplasmic side. The chain crosses the membrane as a helical span at residues 529–549 (LLPTAFGNIGILLCFVAGSFM). An N-linked (GlcNAc...) asparagine glycan is attached at N550. Over 550 to 552 (NWS) the chain is Extracellular. A helical membrane pass occupies residues 553–573 (MLAFLGAALPVPFLILMFLIP). At 574-636 (ETPRWFVGRG…ELLKLNNLKP (63 aa)) the chain is on the cytoplasmic side. The helical transmembrane segment at 637 to 657 (LSISLGLMFFQQFSGINAVIF) threads the bilayer. Residues 658–673 (YTVQIFKDAGSTIDGN) are Extracellular-facing. Residues 674 to 694 (LCTIIVGIVNFLATFIGIVLI) traverse the membrane as a helical segment. At 695–700 (DRAGRK) the chain is on the cytoplasmic side. Residues 701–721 (ILLYVSDIAMVLTLFVLGGFF) form a helical membrane-spanning segment. Residues 722–740 (YCKANGPDVSHLGWLPLTC) lie on the Extracellular side of the membrane. The chain crosses the membrane as a helical span at residues 741-761 (FVIYILGFSLGFGPIPWLMMG). Over 762–767 (EILPAK) the chain is Cytoplasmic. A helical membrane pass occupies residues 768 to 788 (IRGSAASVATAFNWFCTFVVT). Topologically, residues 789-801 (KTFQDLTVAMGAH) are extracellular. The chain crosses the membrane as a helical span at residues 802–822 (GAFWLFGAICFVGLFFVIIYV). The Cytoplasmic portion of the chain corresponds to 823-857 (PETQGKTLEDIERKMMGRVRRMSSVANIKPLSFNM). 2 positions are modified to phosphoserine: S845 and S846.

This sequence belongs to the major facilitator superfamily. Sugar transporter (TC 2.A.1.1) family. Trehalose transporter subfamily.

The protein resides in the cell membrane. In terms of biological role, low-capacity facilitative transporter for trehalose. Does not transport maltose, sucrose or lactose. Mediates the bidirectional transfer of trehalose. Responsible for the transport of trehalose synthesized in the fat body and the incorporation of trehalose into other tissues that require a carbon source, thereby regulating trehalose levels in the hemolymph. The chain is Facilitated trehalose transporter Tret1-1 from Drosophila sechellia (Fruit fly).